The chain runs to 125 residues: RutC family protein STK_08110 (125 aa).

It belongs to the RutC family.

This chain is RutC family protein STK_08110, found in Sulfurisphaera tokodaii (strain DSM 16993 / JCM 10545 / NBRC 100140 / 7) (Sulfolobus tokodaii).